A 284-amino-acid chain; its full sequence is Diaminopimelate epimerase (284 aa).

Positions 14 and 67 each coordinate substrate. Cys76 acts as the Proton donor in catalysis. Residues 77-78 (GN), Asn166, Asn199, and 217-218 (ER) each bind substrate. Catalysis depends on Cys226, which acts as the Proton acceptor. 227 to 228 (GT) contributes to the substrate binding site.

The protein belongs to the diaminopimelate epimerase family. In terms of assembly, homodimer.

Its subcellular location is the cytoplasm. The catalysed reaction is (2S,6S)-2,6-diaminopimelate = meso-2,6-diaminopimelate. It participates in amino-acid biosynthesis; L-lysine biosynthesis via DAP pathway; DL-2,6-diaminopimelate from LL-2,6-diaminopimelate: step 1/1. Its function is as follows. Catalyzes the stereoinversion of LL-2,6-diaminopimelate (L,L-DAP) to meso-diaminopimelate (meso-DAP), a precursor of L-lysine and an essential component of the bacterial peptidoglycan. The chain is Diaminopimelate epimerase from Geobacillus sp. (strain WCH70).